Here is a 363-residue protein sequence, read N- to C-terminus: LIM and cysteine-rich domains protein 1 (363 aa).

Residue serine 16 is modified to Phosphoserine. In terms of domain architecture, PET spans 99–206; the sequence is MIMTNPIATG…GEVALPGQGG (108 aa). The interval 200–233 is disordered; sequence ALPGQGGLPKEEGKQQEKPEGAETAAPTANGSLG. Residues 208-220 show a composition bias toward basic and acidic residues; that stretch reads PKEEGKQQEKPEG. 2 LIM zinc-binding domains span residues 239–304 and 305–363; these read YVCE…SLRP and RCSG…SKRT.

In terms of assembly, interacts with beta-dystroglycan. Interacts with GATA1, GATA4 and GATA6. Highly expressed in both skeletal muscle and cardiac muscle.

Its subcellular location is the cytoplasm. The protein localises to the nucleus. In terms of biological role, transcriptional cofactor that restricts GATA6 function by inhibiting DNA-binding, resulting in repression of GATA6 transcriptional activation of downstream target genes. Represses GATA6-mediated trans activation of lung- and cardiac tissue-specific promoters. Inhibits DNA-binding by GATA4 and GATA1 to the cTNC promoter. Plays a critical role in the development of cardiac hypertrophy via activation of calcineurin/nuclear factor of activated T-cells signaling pathway. The chain is LIM and cysteine-rich domains protein 1 (LMCD1) from Sus scrofa (Pig).